A 434-amino-acid chain; its full sequence is Methylenetetrahydrofolate--tRNA-(uracil-5-)-methyltransferase TrmFO (434 aa).

Residue glycine 10 to glycine 15 participates in FAD binding.

Belongs to the MnmG family. TrmFO subfamily. It depends on FAD as a cofactor.

It localises to the cytoplasm. The catalysed reaction is uridine(54) in tRNA + (6R)-5,10-methylene-5,6,7,8-tetrahydrofolate + NADH + H(+) = 5-methyluridine(54) in tRNA + (6S)-5,6,7,8-tetrahydrofolate + NAD(+). It catalyses the reaction uridine(54) in tRNA + (6R)-5,10-methylene-5,6,7,8-tetrahydrofolate + NADPH + H(+) = 5-methyluridine(54) in tRNA + (6S)-5,6,7,8-tetrahydrofolate + NADP(+). In terms of biological role, catalyzes the folate-dependent formation of 5-methyl-uridine at position 54 (M-5-U54) in all tRNAs. This is Methylenetetrahydrofolate--tRNA-(uracil-5-)-methyltransferase TrmFO from Bacillus cereus (strain G9842).